We begin with the raw amino-acid sequence, 258 residues long: 14-3-3-like protein F (258 aa).

This sequence belongs to the 14-3-3 family.

In Nicotiana tabacum (Common tobacco), this protein is 14-3-3-like protein F.